The chain runs to 254 residues: Adenosine 5'-phosphosulfate reductase (254 aa).

Positions 140, 141, 223, and 226 each coordinate [4Fe-4S] cluster. Catalysis depends on Cys-249, which acts as the Nucleophile; cysteine thiosulfonate intermediate.

This sequence belongs to the PAPS reductase family. CysH subfamily. Requires [4Fe-4S] cluster as cofactor.

The protein resides in the cytoplasm. It catalyses the reaction [thioredoxin]-disulfide + sulfite + AMP + 2 H(+) = adenosine 5'-phosphosulfate + [thioredoxin]-dithiol. Its pathway is sulfur metabolism; hydrogen sulfide biosynthesis; sulfite from sulfate. In terms of biological role, catalyzes the formation of sulfite from adenosine 5'-phosphosulfate (APS) using thioredoxin as an electron donor. The protein is Adenosine 5'-phosphosulfate reductase of Mycobacterium bovis (strain ATCC BAA-935 / AF2122/97).